The primary structure comprises 256 residues: Sec-independent protein translocase protein TatC (256 aa).

6 helical membrane-spanning segments follow: residues 25–45 (VICV…IYHF), 77–97 (AIVA…AFIA), 117–137 (ILFY…VFSF), 158–178 (FALA…AIIL), 195–215 (PYII…DVFS), and 217–237 (TLLA…ARFY).

Belongs to the TatC family. In terms of assembly, the Tat system comprises two distinct complexes: a TatABC complex, containing multiple copies of TatA, TatB and TatC subunits, and a separate TatA complex, containing only TatA subunits. Substrates initially bind to the TatABC complex, which probably triggers association of the separate TatA complex to form the active translocon.

The protein resides in the cell inner membrane. Part of the twin-arginine translocation (Tat) system that transports large folded proteins containing a characteristic twin-arginine motif in their signal peptide across membranes. Together with TatB, TatC is part of a receptor directly interacting with Tat signal peptides. The protein is Sec-independent protein translocase protein TatC of Haemophilus influenzae (strain ATCC 51907 / DSM 11121 / KW20 / Rd).